The following is a 160-amino-acid chain: MLTHLDSQGRANMVDVTEKAVTSREATAEAVVRMRPETLQLIQDGGHPKGDVFAVARIAGIQAAKRTHELIPLCHPLLLTSVKLELQAEAPDAVRIRARCRLAGQTGVEMEALTAASVAALTIYDMCKAVDRGMVIEQVQLLEKLGGKSGHYRKEEEGQA.

Substrate contacts are provided by residues 73-75 and 110-111; these read LCH and ME. The active site involves Asp-125.

Belongs to the MoaC family. Homohexamer; trimer of dimers.

The catalysed reaction is (8S)-3',8-cyclo-7,8-dihydroguanosine 5'-triphosphate = cyclic pyranopterin phosphate + diphosphate. Its pathway is cofactor biosynthesis; molybdopterin biosynthesis. Catalyzes the conversion of (8S)-3',8-cyclo-7,8-dihydroguanosine 5'-triphosphate to cyclic pyranopterin monophosphate (cPMP). This chain is Cyclic pyranopterin monophosphate synthase, found in Pseudomonas aeruginosa (strain LESB58).